The chain runs to 383 residues: Retrovirus-related Pol polyprotein from type-1 retrotransposable element R1 3 (383 aa).

One can recognise a Reverse transcriptase domain in the interval 1 to 88; sequence VDAFADDLLL…DRVRYLGVNV (88 aa). The tract at residues 229–383 is nucleic acid-binding endonuclease; the sequence is LSLHECRELV…VQRMRENEES (155 aa).

It catalyses the reaction DNA(n) + a 2'-deoxyribonucleoside 5'-triphosphate = DNA(n+1) + diphosphate. This is Retrovirus-related Pol polyprotein from type-1 retrotransposable element R1 3 from Nasonia vitripennis (Parasitic wasp).